A 195-amino-acid chain; its full sequence is Rubrerythrin (195 aa).

The Ferritin-like diiron domain maps to 1–150 (MKSLKGTKTA…KLAKNIEEGK (150 aa)). Fe(3+) is bound by residues glutamate 20, glutamate 53, glutamate 98, glutamate 101, glutamate 132, histidine 135, cysteine 162, cysteine 165, cysteine 178, and cysteine 181. The region spanning 157–195 (VVLWKCGNCGFIWEGAEAPLKCPACLHPQAYFEVFKETY) is the Rubredoxin-like domain.

As to quaternary structure, homodimer. Possesses two rubredoxin-like centers and two non-sulfur oxo-bridged di-iron centers per dimer. The cofactor is Fe(3+).

Its subcellular location is the cytoplasm. In terms of biological role, may provide oxidative stress protection via catalytic reduction of intracellular hydrogen peroxide. This is Rubrerythrin (rbr) from Clostridium perfringens (strain 13 / Type A).